The sequence spans 380 residues: Chaperone protein DnaJ (380 aa).

Residues 5–69 (DYYEILGVSK…QKRAHYDQFG (65 aa)) enclose the J domain. The CR-type zinc-finger motif lies at 135–217 (GKETDIEIPS…CGGTGRVKRR (83 aa)). Zn(2+) is bound by residues cysteine 148, cysteine 151, cysteine 165, cysteine 168, cysteine 191, cysteine 194, cysteine 205, and cysteine 208. CXXCXGXG motif repeat units lie at residues 148–155 (CNTCHGTG), 165–172 (CPHCHGAG), 191–198 (CPYCGGTG), and 205–212 (CTTCGGTG).

Belongs to the DnaJ family. Homodimer. Requires Zn(2+) as cofactor.

Its subcellular location is the cytoplasm. Its function is as follows. Participates actively in the response to hyperosmotic and heat shock by preventing the aggregation of stress-denatured proteins and by disaggregating proteins, also in an autonomous, DnaK-independent fashion. Unfolded proteins bind initially to DnaJ; upon interaction with the DnaJ-bound protein, DnaK hydrolyzes its bound ATP, resulting in the formation of a stable complex. GrpE releases ADP from DnaK; ATP binding to DnaK triggers the release of the substrate protein, thus completing the reaction cycle. Several rounds of ATP-dependent interactions between DnaJ, DnaK and GrpE are required for fully efficient folding. Also involved, together with DnaK and GrpE, in the DNA replication of plasmids through activation of initiation proteins. This is Chaperone protein DnaJ from Geobacillus stearothermophilus (Bacillus stearothermophilus).